Here is a 253-residue protein sequence, read N- to C-terminus: MLDFFSKKGNEDSEEIVLIEDKMPKHIAIIMDGNGRWAKKRGLPRTMGHRAGVKTIKTIVKECDKLGVKYLTLYAFSTENWKRPEDEVNALMKLVVEFIKNEIDELHQNGVRVQTIGDLSRFPEEPKKAILWAMEKTKDNTGVVLSLALNYGGRNEIVRGIKSVIEDVKAGKISIDDINEDMFNDYLYTKGMPDPDLIIRPSGEQRLSNFLLWQCAYSEFWYSQINWPDFNGEDLRKAIFDYQNRDRRFGGIK.

The active site involves aspartate 32. Aspartate 32 contacts Mg(2+). Substrate contacts are provided by residues glycine 33–arginine 36, tryptophan 37, arginine 45, histidine 49, and serine 77–glutamate 79. Asparagine 80 functions as the Proton acceptor in the catalytic mechanism. Residues tryptophan 81, arginine 83, arginine 200, and arginine 206–serine 208 contribute to the substrate site. Position 219 (glutamate 219) interacts with Mg(2+).

It belongs to the UPP synthase family. As to quaternary structure, homodimer. Mg(2+) is required as a cofactor.

Functionally, catalyzes the condensation of isopentenyl diphosphate (IPP) with allylic pyrophosphates generating different type of terpenoids. This chain is Isoprenyl transferase, found in Clostridium perfringens (strain 13 / Type A).